The primary structure comprises 309 residues: Probable 3-hydroxyacyl-CoA dehydrogenase B0272.3 (309 aa).

Belongs to the 3-hydroxyacyl-CoA dehydrogenase family. In terms of assembly, homodimer.

It localises to the mitochondrion matrix. It carries out the reaction a (3S)-3-hydroxyacyl-CoA + NAD(+) = a 3-oxoacyl-CoA + NADH + H(+). Its pathway is lipid metabolism; fatty acid beta-oxidation. The chain is Probable 3-hydroxyacyl-CoA dehydrogenase B0272.3 from Caenorhabditis elegans.